Consider the following 179-residue polypeptide: ATP synthase subunit b, chloroplastic (179 aa).

A helical transmembrane segment spans residues 35–51 (IVILGGGIFKLGSTALS).

This sequence belongs to the ATPase B chain family. As to quaternary structure, F-type ATPases have 2 components, F(1) - the catalytic core - and F(0) - the membrane proton channel. F(1) has five subunits: alpha(3), beta(3), gamma(1), delta(1), epsilon(1). F(0) has four main subunits: a(1), b(1), b'(1) and c(10-14). The alpha and beta chains form an alternating ring which encloses part of the gamma chain. F(1) is attached to F(0) by a central stalk formed by the gamma and epsilon chains, while a peripheral stalk is formed by the delta, b and b' chains.

The protein localises to the plastid. The protein resides in the chloroplast thylakoid membrane. F(1)F(0) ATP synthase produces ATP from ADP in the presence of a proton or sodium gradient. F-type ATPases consist of two structural domains, F(1) containing the extramembraneous catalytic core and F(0) containing the membrane proton channel, linked together by a central stalk and a peripheral stalk. During catalysis, ATP synthesis in the catalytic domain of F(1) is coupled via a rotary mechanism of the central stalk subunits to proton translocation. Functionally, component of the F(0) channel, it forms part of the peripheral stalk, linking F(1) to F(0). This chain is ATP synthase subunit b, chloroplastic, found in Emiliania huxleyi (Coccolithophore).